The sequence spans 31 residues: MSTITSYFGFLLAASTITPALLIGLSKIRLI.

The chain crosses the membrane as a helical span at residues 4–26; it reads ITSYFGFLLAASTITPALLIGLS.

The protein belongs to the PetL family. In terms of assembly, the 4 large subunits of the cytochrome b6-f complex are cytochrome b6, subunit IV (17 kDa polypeptide, PetD), cytochrome f and the Rieske protein, while the 4 small subunits are PetG, PetL, PetM and PetN. The complex functions as a dimer.

It localises to the plastid. Its subcellular location is the chloroplast thylakoid membrane. Component of the cytochrome b6-f complex, which mediates electron transfer between photosystem II (PSII) and photosystem I (PSI), cyclic electron flow around PSI, and state transitions. PetL is important for photoautotrophic growth as well as for electron transfer efficiency and stability of the cytochrome b6-f complex. This chain is Cytochrome b6-f complex subunit 6, found in Liriodendron tulipifera (Tuliptree).